A 234-amino-acid chain; its full sequence is MLTSHFPLPFAGHRLHIVDFDASSFHEHDLLWLPHHDRLRSAGRKRKAEHLAGRIAAVHALREVGVRAVPGIGDKRQPLWPDGLFGSISHCASTALAVISRQRVGVDIEKIMSQHTATELAPSIIDSDERQILQASSLPFPLALTLAFSAKESVYKAFSDRVTLPGFDSAKITSLNATHISLHLLPAFAAMMAERTVRTEWFQRGNSVITLVSAITRFPHDRSAPASILSAIPR.

Mg(2+) contacts are provided by D107, E109, and E152.

The protein belongs to the P-Pant transferase superfamily. EntD family. In terms of assembly, entB, EntD, EntE, and EntF form a multienzyme complex called enterobactin synthase. The cofactor is Mg(2+).

The protein localises to the membrane. The catalysed reaction is apo-[aryl-carrier protein] + CoA = holo-[aryl-carrier protein] + adenosine 3',5'-bisphosphate + H(+). It carries out the reaction apo-[peptidyl-carrier protein] + CoA = holo-[peptidyl-carrier protein] + adenosine 3',5'-bisphosphate + H(+). It participates in siderophore biosynthesis; enterobactin biosynthesis. In terms of biological role, involved in the biosynthesis of the siderophore enterobactin (enterochelin), which is a macrocyclic trimeric lactone of N-(2,3-dihydroxybenzoyl)-serine. The serine trilactone serves as a scaffolding for the three catechol functionalities that provide hexadentate coordination for the tightly ligated iron(2+) atoms. Plays an essential role in the assembly of the enterobactin by catalyzing the transfer of the 4'-phosphopantetheine (Ppant) moiety from coenzyme A to the apo-domains of both EntB (ArCP domain) and EntF (PCP domain) to yield their holo-forms which make them competent for the activation of 2,3-dihydroxybenzoate (DHB) and L-serine, respectively. The chain is Enterobactin synthase component D from Salmonella typhi.